Reading from the N-terminus, the 769-residue chain is Serine protease HtrA-like (769 aa).

The span at 1-20 shows a compositional bias: basic residues; sequence MDIGKKHVIPKSQYRRKRRE. A disordered region spans residues 1 to 390; it reads MDIGKKHVIP…ATSKLNKGRA (390 aa). Composition is skewed to basic and acidic residues over residues 21-64 and 71-108; these read FFHN…ERFK and LEQR…DVSK. A compositionally biased stretch (polar residues) spans 126 to 137; it reads YEQNSEATLSTK. Positions 138-186 are enriched in basic and acidic residues; that stretch reads STDKVESTDMRKLSSDKNKVGHEEQHVLSKPSEHDKETRIDFESSRTDS. Over residues 247–262 the composition is skewed to polar residues; it reads QQSQNEQTKTYTYGDS. Basic and acidic residues-rich tracts occupy residues 264 to 296 and 310 to 330; these read QNDK…HIVD and KTDD…HKQN. Polar residues predominate over residues 331 to 347; the sequence is ADSSETVGYQSQSSASH. Positions 348–364 are enriched in basic and acidic residues; sequence RITEKRNNAINDHDKLN. Residues 366-390 are compositionally biased toward polar residues; the sequence is QKPNAKTSANNNQKKATSKLNKGRA. A helical transmembrane segment spans residues 410–430; the sequence is LVILMGIIILIVILNAIFNNV. Catalysis depends on charge relay system residues H504, D534, and S619. The PDZ domain occupies 680–733; sequence IASLNSFERQAVKLPGKVKNGVVVDQVDNNGLADQSGLKKGDVITELDGKLLED.

The protein belongs to the peptidase S1C family.

It localises to the cell membrane. The chain is Serine protease HtrA-like from Staphylococcus aureus (strain MSSA476).